The following is a 195-amino-acid chain: Large ribosomal subunit protein uL5 (195 aa).

Belongs to the universal ribosomal protein uL5 family. Part of the 50S ribosomal subunit; part of the 5S rRNA/L5/L18/L25 subcomplex. Contacts the 5S rRNA and the P site tRNA. Forms a bridge to the 30S subunit in the 70S ribosome.

In terms of biological role, this is one of the proteins that bind and probably mediate the attachment of the 5S RNA into the large ribosomal subunit, where it forms part of the central protuberance. In the 70S ribosome it contacts protein S13 of the 30S subunit (bridge B1b), connecting the 2 subunits; this bridge is implicated in subunit movement. Contacts the P site tRNA; the 5S rRNA and some of its associated proteins might help stabilize positioning of ribosome-bound tRNAs. The protein is Large ribosomal subunit protein uL5 of Chlorobium phaeobacteroides (strain DSM 266 / SMG 266 / 2430).